Reading from the N-terminus, the 621-residue chain is Chaperone protein HscA homolog (621 aa).

Belongs to the heat shock protein 70 family.

Chaperone involved in the maturation of iron-sulfur cluster-containing proteins. Has a low intrinsic ATPase activity which is markedly stimulated by HscB. The chain is Chaperone protein HscA homolog from Pseudomonas fluorescens (strain Pf0-1).